Reading from the N-terminus, the 289-residue chain is Ribosomal RNA small subunit methyltransferase I (289 aa).

The protein belongs to the methyltransferase superfamily. RsmI family.

It localises to the cytoplasm. The enzyme catalyses cytidine(1402) in 16S rRNA + S-adenosyl-L-methionine = 2'-O-methylcytidine(1402) in 16S rRNA + S-adenosyl-L-homocysteine + H(+). Its function is as follows. Catalyzes the 2'-O-methylation of the ribose of cytidine 1402 (C1402) in 16S rRNA. This is Ribosomal RNA small subunit methyltransferase I from Helicobacter pylori (strain J99 / ATCC 700824) (Campylobacter pylori J99).